A 615-amino-acid polypeptide reads, in one-letter code: MESMFEDDISILTQEALGPSEVWLDSPGDPSLGGDMCSASHFALITAYGDIKERLGGLERENATLRRRLKVYEIKYPLISDFGEEHGFSLYEIKDGSLLEVEKVSLQQRLNQFQHELQKNKEQEEQLGEMIQAYEKLCVEKSDLETELREMRALVETHLRQICGLEQQLRQQQGLQDAAFSNLSPPPAPAPPCTDLDLHYLALRGGSGLSHAGWPGSTPSVSDLERRRLEEALEAAQGEARGAQLREEQLQAECERLQGELKQLQETRAQDLASNQSERDMAWVKRVGDDQVNLALAYTELTEELGRLRELSSLQGRILRTLLQEQARSGGQRHSPLSQRHSPAPQCPSPSPPARAAPPCPPCQSPVPQRRSPVPPCPSPQQRRSPASPSCPSPVPQRRSPVPPSCQSPSPQRRSPVPPSCPAPQPRPPPPPPPGERTLAERAYAKPPSHHVKAGFQGRRSYSELAEGAAYAGASPPWLQAEAATLPKPRAYGSELYGPGRPLSPRRAFEGIRLRFEKQPSEEDEWAVPTSPPSPEVGTIRCASFCAGFPIPESPAATAYAHAEHAQSWPSINLLMETVGSDIRSCPLCQLGFPVGYPDDALIKHIDSHLENSKI.

Positions methionine 1–arginine 279 are homodimerization. Positions tyrosine 48–isoleucine 162 form a coiled coil. Serine 184 carries the post-translational modification Phosphoserine. Residues valine 221 to glutamine 276 are a coiled coil. The interaction with TBK1 and IKBKE stretch occupies residues aspartate 280–serine 329. The tract at residues glutamine 326–glycine 458 is disordered. Residues proline 345 to serine 365 are compositionally biased toward pro residues. Residues serine 365, serine 372, serine 379, serine 385, serine 400, and serine 415 each carry the phosphoserine modification. The segment covering proline 389–cysteine 406 has biased composition (pro residues). The span at proline 416–glycine 435 shows a compositional bias: pro residues. Phosphoserine occurs at positions 504 and 534. Residues isoleucine 583 to histidine 609 form a UBZ1-type zinc finger. Positions 586, 589, 605, and 609 each coordinate Zn(2+).

In terms of assembly, homodimer. May form a heterodimer with NAP1. Interacts with TKB1 and IKBKE. Weakly interacts with DDX3X. (Microbial infection) Interacts with vaccinia virus protein C6. Detected in leukocytes, lung, placenta, small intestine, liver, kidney, spleen, muscle, heart, brain and at low levels in thymus.

Adapter protein which constitutively binds TBK1 and IKBKE playing a role in antiviral innate immunity. The protein is TANK-binding kinase 1-binding protein 1 of Homo sapiens (Human).